Here is a 256-residue protein sequence, read N- to C-terminus: Small ribosomal subunit protein bS18m (256 aa).

The disordered stretch occupies residues 19–106; sequence GQRTAQFSTT…GGQRYGSNSQ (88 aa). Positions 21 to 30 are enriched in polar residues; sequence RTAQFSTTSP. Over residues 44 to 66 the composition is skewed to low complexity; sequence NAPRTNTNTSSPSSNNNNNAGSS.

This sequence belongs to the bacterial ribosomal protein bS18 family. Component of the mitochondrial small ribosomal subunit (mt-SSU). Mature N.crassa 74S mitochondrial ribosomes consist of a small (37S) and a large (54S) subunit. The 37S small subunit contains a 16S ribosomal RNA (16S mt-rRNA) and 32 different proteins. The 54S large subunit contains a 23S rRNA (23S mt-rRNA) and 42 different proteins.

It is found in the mitochondrion. Functionally, component of the mitochondrial ribosome (mitoribosome), a dedicated translation machinery responsible for the synthesis of mitochondrial genome-encoded proteins, including at least some of the essential transmembrane subunits of the mitochondrial respiratory chain. The mitoribosomes are attached to the mitochondrial inner membrane and translation products are cotranslationally integrated into the membrane. This chain is Small ribosomal subunit protein bS18m (rsm18), found in Neurospora crassa (strain ATCC 24698 / 74-OR23-1A / CBS 708.71 / DSM 1257 / FGSC 987).